We begin with the raw amino-acid sequence, 243 residues long: Small ribosomal subunit protein uS2c (243 aa).

Belongs to the universal ribosomal protein uS2 family.

The protein localises to the plastid. It is found in the chloroplast. This is Small ribosomal subunit protein uS2c (rps2) from Cyanidium caldarium (Red alga).